A 250-amino-acid chain; its full sequence is Tetrahydromethanopterin S-methyltransferase subunit D (250 aa).

6 consecutive transmembrane segments (helical) span residues 9-29 (IIWM…VHFV), 47-67 (GTVQ…GFMM), 86-106 (IMIA…VGVV), 144-164 (IIGG…LIEV), 184-204 (LVAV…VIPS), and 230-250 (LVAS…LGGI).

The protein belongs to the MtrD family. In terms of assembly, the complex is composed of 8 subunits; MtrA, MtrB, MtrC, MtrD, MtrE, MtrF, MtrG and MtrH.

It localises to the cell membrane. It carries out the reaction 5-methyl-5,6,7,8-tetrahydromethanopterin + coenzyme M + 2 Na(+)(in) = 5,6,7,8-tetrahydromethanopterin + methyl-coenzyme M + 2 Na(+)(out). It participates in one-carbon metabolism; methanogenesis from CO(2); methyl-coenzyme M from 5,10-methylene-5,6,7,8-tetrahydromethanopterin: step 2/2. Functionally, part of a complex that catalyzes the formation of methyl-coenzyme M and tetrahydromethanopterin from coenzyme M and methyl-tetrahydromethanopterin. This is an energy-conserving, sodium-ion translocating step. This Methanosarcina barkeri (strain Fusaro / DSM 804) protein is Tetrahydromethanopterin S-methyltransferase subunit D.